The primary structure comprises 584 residues: Leucine-rich repeat and fibronectin type III domain-containing protein 1 (584 aa).

A signal peptide spans 1–17; that stretch reads MERLVFCVLVFGALAKA. The LRRNT domain maps to 18-51; it reads QLCPGRCICQTISPTLTLLCAKTGLLFVPPTVDR. Residues 18–494 lie on the Extracellular side of the membrane; it reads QLCPGRCICQ…VPSQFLGGTM (477 aa). 7 LRR repeats span residues 52-73, 76-97, 100-121, 124-145, 149-170, 173-194, and 197-218; these read KTVE…DFLN, SLVH…AFMG, SLRA…QLKG, NLRH…SFDE, TIED…AIAR, NINT…TFTL, and KLVR…TLFQ. N-linked (GlcNAc...) asparagine glycosylation occurs at asparagine 73. The LRRCT domain maps to 241 to 287; the sequence is NPLHCNCELLWLRRLTREDDLETCASPEHLMDKYFWSIQEEEFICEP. An Ig-like domain is found at 288–375; the sequence is PLITKHQVTK…GIATAAVHVH (88 aa). Cysteine 310 and cysteine 359 form a disulfide bridge. 5 N-linked (GlcNAc...) asparagine glycosylation sites follow: asparagine 332, asparagine 341, asparagine 384, asparagine 408, and asparagine 421. The disordered stretch occupies residues 393-414; sequence DPGLSDISTSSRSSSNDSKTHS. Positions 397 to 409 are enriched in low complexity; it reads SDISTSSRSSSND. The chain crosses the membrane as a helical span at residues 495–515; that stretch reads IIIIGGIIVASVLVFIIILMI. Over 516–584 the chain is Cytoplasmic; it reads RYKAYSGGGG…MVLPILHLLF (69 aa). The interval 539 to 564 is disordered; sequence HVHSQTNGSRSAATKQSEEPPESPAG. Positions 540–553 are enriched in polar residues; that stretch reads VHSQTNGSRSAATK.

The protein belongs to the LRFN family.

It localises to the membrane. It is found in the synapse. Its function is as follows. Involved in the regulation of excitatory synapses. In Danio rerio (Zebrafish), this protein is Leucine-rich repeat and fibronectin type III domain-containing protein 1 (lrfn1).